A 946-amino-acid chain; its full sequence is DNA primase (946 aa).

The interval 596–626 (RDTEEDEDGKEDKNNVPGNGVFQKTTSSVDT) is disordered. A compositionally biased stretch (polar residues) spans 617–626 (FQKTTSSVDT). The CHC2-type zinc-finger motif lies at 881–920 (CLNYTHRNPQETVQVFIDLRTEHSYALWASLWSRCFTKKC).

It belongs to the herpesviridae DNA primase family. In terms of assembly, associates with the helicase and the primase-associated factor to form the helicase-primase factor.

It localises to the host nucleus. In terms of biological role, essential component of the helicase/primase complex. Unwinds the DNA at the replication forks and generates single-stranded DNA for both leading and lagging strand synthesis. The primase initiates primer synthesis and thereby produces large amount of short RNA primers on the lagging strand that the polymerase elongates using dNTPs. In Human cytomegalovirus (strain Merlin) (HHV-5), this protein is DNA primase (UL70).